A 117-amino-acid polypeptide reads, in one-letter code: Hydrogenase maturation factor HypA (117 aa).

His-2 contributes to the Ni(2+) binding site. The Zn(2+) site is built by Cys-73, Cys-76, Cys-90, and Cys-93.

Belongs to the HypA/HybF family.

Involved in the maturation of [NiFe] hydrogenases. Required for nickel insertion into the metal center of the hydrogenase. The polypeptide is Hydrogenase maturation factor HypA (Pectobacterium atrosepticum (strain SCRI 1043 / ATCC BAA-672) (Erwinia carotovora subsp. atroseptica)).